The primary structure comprises 510 residues: Hyaluronidase PH-20 (510 aa).

Positions 1–35 are cleaved as a signal peptide; the sequence is MGVLKFKHIFFRSFVKSSGVSQIVFTFLLIPCCLT. 2 disulfide bridges follow: Cys60/Cys351 and Cys224/Cys238. N-linked (GlcNAc...) asparagine glycosylation is present at Asn82. The Proton donor role is filled by Glu148. 4 N-linked (GlcNAc...) asparagine glycosylation sites follow: Asn166, Asn235, Asn254, and Asn368. 3 disulfides stabilise this stretch: Cys376–Cys387, Cys381–Cys435, and Cys437–Cys464. Asn393, Asn440, and Asn484 each carry an N-linked (GlcNAc...) asparagine glycan. Ser491 is lipidated: GPI-anchor amidated serine. Positions 492–510 are cleaved as a propeptide — removed in mature form; sequence TTMFIVNILFLIISSVASL.

Belongs to the glycosyl hydrolase 56 family. In terms of tissue distribution, testis.

It is found in the cell membrane. It catalyses the reaction Random hydrolysis of (1-&gt;4)-linkages between N-acetyl-beta-D-glucosamine and D-glucuronate residues in hyaluronate.. Involved in sperm-egg adhesion. Upon fertilization sperm must first penetrate a layer of cumulus cells that surrounds the egg before reaching the zona pellucida. The cumulus cells are embedded in a matrix containing hyaluronic acid which is formed prior to ovulation. This protein aids in penetrating the layer of cumulus cells by digesting hyaluronic acid. The chain is Hyaluronidase PH-20 (SPAM1) from Macaca fascicularis (Crab-eating macaque).